Reading from the N-terminus, the 419-residue chain is Creatine kinase S-type, mitochondrial (419 aa).

Residues 1–39 (MASAFSKLLTGRNASLLFTTLGTSALTTGYLLNRQKVSA) constitute a mitochondrion transit peptide. A cardiolipin-binding region spans residues 40–64 (DAREQHKLFPPSADYPDLRKHNNCM). The region spanning 46-132 (KLFPPSADYP…FDPVIKLRHN (87 aa)) is the Phosphagen kinase N-terminal domain. Residues 159 to 401 (YVLSSRVRTG…NYLVDCEKKL (243 aa)) form the Phosphagen kinase C-terminal domain. ATP contacts are provided by residues 162-166 (SSRVR) and H225. Position 255 is a phosphotyrosine (Y255). ATP contacts are provided by residues R270, R326, 354 to 359 (RGTGGV), and D369. The residue at position 356 (T356) is a Phosphothreonine.

It belongs to the ATP:guanido phosphotransferase family. Exists as an octamer composed of four CKMT2 homodimers.

It localises to the mitochondrion inner membrane. The catalysed reaction is creatine + ATP = N-phosphocreatine + ADP + H(+). Reversibly catalyzes the transfer of phosphate between ATP and various phosphogens (e.g. creatine phosphate). Creatine kinase isoenzymes play a central role in energy transduction in tissues with large, fluctuating energy demands, such as skeletal muscle, heart, brain and spermatozoa. The polypeptide is Creatine kinase S-type, mitochondrial (Ckmt2) (Mus musculus (Mouse)).